A 249-amino-acid chain; its full sequence is Transcription factor MYB90 (249 aa).

2 consecutive HTH myb-type domains span residues 5–57 (SKGL…LNYL) and 58–112 (KPSI…SKKH). 2 consecutive DNA-binding regions (H-T-H motif) follow at residues 33-57 (WHQVPLRAGLNRCRKSCRLRWLNYL) and 85-108 (WSLIAGRLPGRTANDVKNYWNTHL).

As to quaternary structure, interacts with BHLH12/MYC1, BHLH1/GL3/MYC6, BHLH2/EGL3/MYC146, and BHLH42/TT8. Expressed only in leaves and siliques.

The protein resides in the nucleus. Transcription activator, when associated with BHLH12/MYC1, EGL3, or GL3. Promotes the synthesis of phenylpropanoid-derived compounds such as anthocyanins. The chain is Transcription factor MYB90 (MYB90) from Arabidopsis thaliana (Mouse-ear cress).